Here is a 210-residue protein sequence, read N- to C-terminus: Small ribosomal subunit protein uS4 (210 aa).

The disordered stretch occupies residues 30-49 (EKSSLEKRKYPPGLPPKKKG). In terms of domain architecture, S4 RNA-binding spans 99 to 162 (RRLDNVLYRM…QKSAFIEENI (64 aa)).

The protein belongs to the universal ribosomal protein uS4 family. In terms of assembly, part of the 30S ribosomal subunit. Contacts protein S5. The interaction surface between S4 and S5 is involved in control of translational fidelity.

Functionally, one of the primary rRNA binding proteins, it binds directly to 16S rRNA where it nucleates assembly of the body of the 30S subunit. In terms of biological role, with S5 and S12 plays an important role in translational accuracy. This Leptospira biflexa serovar Patoc (strain Patoc 1 / Ames) protein is Small ribosomal subunit protein uS4.